The chain runs to 49 residues: Protein YlcJ (49 aa).

The signal sequence occupies residues 1–21; it reads MSLVLCFLLMSLFFMYSFVLS.

The chain is Protein YlcJ from Escherichia coli (strain K12).